The chain runs to 443 residues: Xaa-Pro dipeptidase (443 aa).

Asp-246, Asp-257, His-339, Glu-384, and Glu-423 together coordinate Mn(2+).

It belongs to the peptidase M24B family. Bacterial-type prolidase subfamily. Mn(2+) is required as a cofactor.

The enzyme catalyses Xaa-L-Pro dipeptide + H2O = an L-alpha-amino acid + L-proline. Functionally, splits dipeptides with a prolyl residue in the C-terminal position. The chain is Xaa-Pro dipeptidase from Escherichia coli (strain SMS-3-5 / SECEC).